Consider the following 176-residue polypeptide: dCTP deaminase (176 aa).

Residues 102–107 (RSTFAR) and aspartate 118 each bind dCTP. The active-site Proton donor/acceptor is glutamate 128. DCTP-binding residues include tyrosine 160 and glutamine 167.

The protein belongs to the dCTP deaminase family. Homotrimer.

The enzyme catalyses dCTP + H2O + H(+) = dUTP + NH4(+). It participates in pyrimidine metabolism; dUMP biosynthesis; dUMP from dCTP (dUTP route): step 1/2. Functionally, catalyzes the deamination of dCTP to dUTP. This chain is dCTP deaminase, found in Hyperthermus butylicus (strain DSM 5456 / JCM 9403 / PLM1-5).